A 356-amino-acid chain; its full sequence is tRNA N6-adenosine threonylcarbamoyltransferase (356 aa).

Residues histidine 115 and histidine 119 each contribute to the Fe cation site. Residues 137 to 141 (LVSGG), aspartate 170, glycine 183, and asparagine 280 each bind substrate. A Fe cation-binding site is contributed by aspartate 308.

The protein belongs to the KAE1 / TsaD family. It depends on Fe(2+) as a cofactor.

The protein resides in the cytoplasm. It catalyses the reaction L-threonylcarbamoyladenylate + adenosine(37) in tRNA = N(6)-L-threonylcarbamoyladenosine(37) in tRNA + AMP + H(+). Required for the formation of a threonylcarbamoyl group on adenosine at position 37 (t(6)A37) in tRNAs that read codons beginning with adenine. Is involved in the transfer of the threonylcarbamoyl moiety of threonylcarbamoyl-AMP (TC-AMP) to the N6 group of A37, together with TsaE and TsaB. TsaD likely plays a direct catalytic role in this reaction. The sequence is that of tRNA N6-adenosine threonylcarbamoyltransferase from Paracoccus denitrificans (strain Pd 1222).